The chain runs to 223 residues: Urease accessory protein UreF (223 aa).

It belongs to the UreF family. In terms of assembly, ureD, UreF and UreG form a complex that acts as a GTP-hydrolysis-dependent molecular chaperone, activating the urease apoprotein by helping to assemble the nickel containing metallocenter of UreC. The UreE protein probably delivers the nickel.

It localises to the cytoplasm. Its function is as follows. Required for maturation of urease via the functional incorporation of the urease nickel metallocenter. The sequence is that of Urease accessory protein UreF from Pseudomonas paraeruginosa (strain DSM 24068 / PA7) (Pseudomonas aeruginosa (strain PA7)).